We begin with the raw amino-acid sequence, 180 residues long: Calcium-binding protein E (180 aa).

4 EF-hand domains span residues 3 to 38 (KVEA…NSNI), 40 to 76 (DPLA…KKIK), 85 to 120 (ALRS…DPDF), and 139 to 174 (RAKS…HPEF). Ca(2+)-binding residues include aspartate 16, aspartate 18, aspartate 20, asparagine 22, and glutamate 27. Residues aspartate 98, aspartate 100, aspartate 102, glutamate 109, aspartate 152, aspartate 154, asparagine 156, lysine 158, and glutamate 163 each contribute to the Ca(2+) site.

This chain is Calcium-binding protein E (cbpE), found in Dictyostelium discoideum (Social amoeba).